We begin with the raw amino-acid sequence, 531 residues long: Acyl-CoA ligase azaF (531 aa).

188–199 contributes to the AMP binding site; that stretch reads RLFSSGTTGLPK. An AMP-binding region spans residues 449 to 525; that stretch reads EVEGVLRNHP…DAIPRNASGK (77 aa).

The protein belongs to the ATP-dependent AMP-binding enzyme family.

The protein operates within secondary metabolite biosynthesis. Acyl-CoA ligase; part of the gene cluster that mediates the biosynthesis of azaphilones, a class of fungal metabolites characterized by a highly oxygenated pyrano-quinone bicyclic core and exhibiting a broad range of bioactivities. In the first step, the non-reducing polyketide synthase azaA forms the hexaketide precursor from successive condensations of five malonyl-CoA units, presumably with a simple acetyl-CoA starter unit. The reactive polyketide chain then undergoes a PT-mediated C2-C7 cyclization to afford the aromatic ring and is eventually released as an aldehyde through the R-domain. The putative ketoreductase azaE is proposed to catalyze the reduction of the terminal ketone resulting in the early culture product FK17-P2a. The monooxygenase azaH was demonstrated to be the only enzyme required to convert FK17-P2a to azanigerone E. AzaH first hydroxylates the benzaldehyde intermediate FK17-P2a at C4, which triggers the formation of the pyran-ring to afford azanigerone E. In parallel, the 2,4-dimethylhexanoyl chain is synthesized by the HR-PKS azaB and is proposed to be transferred to the C4-hydroxyl of azanigerone E by the acyltransferase azaD directly from the ACP domain of azaB. Alternatively, the 2,4-dimethyl-hexanoyl chain may be offloaded from the HR-PKS as a carboxylic acid and converted to an acyl-CoA by azaF. The resulting acyl-CoA molecule could then be taken up as a substrate by AzaD to form azanigerone B. To yield the carboxylic acid substituent in azanigerone A, the hydroxypropyl side chain of azanigerone B would need to undergo a C-C oxidative cleavage catalyzed by cytochrome P450 AzaI. AzaI is proposed to act on a vicinal diol that leads to a C-C bond scission either through an alkoxyradical intermediate or a peroxy complex. In the biosynthesis of azanigerone A, azanigerone B first undergoes hydroxylation at C10, possibly catalyzed by one of the two FAD-dependent monooxygenases encoded in the cluster, azaG or azaL, resulting in the vicinal diol azanigerone C. Oxidative cleavage of azanigerone C by azaI would yield the corresponding aldehyde derivative of azanigerone A. Finally, the dehydrogenase azaJ is proposed to convert the aldehyde functional group into the carboxylic acid, completing the conversion from azanigerone B to azanigerone A. Alternatively, the oxidation of aldehyde to carboxylic acid may be catalyzed by the same P450 enzyme azaI via consecutive oxidation or by endogenous alcohol dehydrogenase. In Aspergillus niger (strain ATCC 1015 / CBS 113.46 / FGSC A1144 / LSHB Ac4 / NCTC 3858a / NRRL 328 / USDA 3528.7), this protein is Acyl-CoA ligase azaF.